Here is a 188-residue protein sequence, read N- to C-terminus: Kappa-casein (188 aa).

A signal peptide spans 1–21 (MMKSSFLIVPILALTLPFLGA). O-linked (GalNAc...) threonine glycans are attached at residues T143 and T148. A Phosphothreonine modification is found at T163. S167 is subject to Phosphoserine; alternate. The O-linked (GalNAc...) serine; alternate glycan is linked to S167. O-linked (GalNAc...) threonine glycosylation is present at T184. The residue at position 185 (S185) is a Phosphoserine.

The protein belongs to the kappa-casein family. As to expression, mammary gland specific. Secreted in milk.

It is found in the secreted. In terms of biological role, kappa-casein stabilizes micelle formation, preventing casein precipitation in milk. The polypeptide is Kappa-casein (CSN3) (Sus scrofa (Pig)).